The sequence spans 332 residues: D-lactate dehydrogenase (332 aa).

NAD(+) is bound by residues 155-156 (RI), Asp-175, 206-207 (VP), Asn-212, 233-235 (FAR), and Asp-259. Residue Arg-235 is part of the active site. The active site involves Glu-264. The active-site Proton donor is the His-296.

The protein belongs to the D-isomer specific 2-hydroxyacid dehydrogenase family.

It catalyses the reaction (R)-lactate + NAD(+) = pyruvate + NADH + H(+). The sequence is that of D-lactate dehydrogenase (ldhD) from Lactiplantibacillus plantarum (strain ATCC BAA-793 / NCIMB 8826 / WCFS1) (Lactobacillus plantarum).